The primary structure comprises 160 residues: 2-C-methyl-D-erythritol 2,4-cyclodiphosphate synthase (160 aa).

Positions 11 and 13 each coordinate a divalent metal cation. 4-CDP-2-C-methyl-D-erythritol 2-phosphate-binding positions include 11-13 (DVH) and 37-38 (HS). Histidine 45 lines the a divalent metal cation pocket. 4-CDP-2-C-methyl-D-erythritol 2-phosphate contacts are provided by residues 59-61 (DIG) and arginine 145.

Belongs to the IspF family. Homotrimer. A divalent metal cation serves as cofactor.

The catalysed reaction is 4-CDP-2-C-methyl-D-erythritol 2-phosphate = 2-C-methyl-D-erythritol 2,4-cyclic diphosphate + CMP. It participates in isoprenoid biosynthesis; isopentenyl diphosphate biosynthesis via DXP pathway; isopentenyl diphosphate from 1-deoxy-D-xylulose 5-phosphate: step 4/6. Functionally, involved in the biosynthesis of isopentenyl diphosphate (IPP) and dimethylallyl diphosphate (DMAPP), two major building blocks of isoprenoid compounds. Catalyzes the conversion of 4-diphosphocytidyl-2-C-methyl-D-erythritol 2-phosphate (CDP-ME2P) to 2-C-methyl-D-erythritol 2,4-cyclodiphosphate (ME-CPP) with a corresponding release of cytidine 5-monophosphate (CMP). The polypeptide is 2-C-methyl-D-erythritol 2,4-cyclodiphosphate synthase (Neisseria gonorrhoeae (strain ATCC 700825 / FA 1090)).